Reading from the N-terminus, the 290-residue chain is 4-hydroxy-3-methylbut-2-enyl diphosphate reductase (290 aa).

Cys12 contributes to the [4Fe-4S] cluster binding site. Residues His50 and His83 each coordinate (2E)-4-hydroxy-3-methylbut-2-enyl diphosphate. His50 and His83 together coordinate dimethylallyl diphosphate. Isopentenyl diphosphate is bound by residues His50 and His83. Cys105 serves as a coordination point for [4Fe-4S] cluster. A (2E)-4-hydroxy-3-methylbut-2-enyl diphosphate-binding site is contributed by His133. Position 133 (His133) interacts with dimethylallyl diphosphate. His133 contacts isopentenyl diphosphate. Residue Glu135 is the Proton donor of the active site. A (2E)-4-hydroxy-3-methylbut-2-enyl diphosphate-binding site is contributed by Thr173. Cys202 is a [4Fe-4S] cluster binding site. Residues Ser230, Asn232, and Ser274 each coordinate (2E)-4-hydroxy-3-methylbut-2-enyl diphosphate. Dimethylallyl diphosphate is bound by residues Ser230, Asn232, and Ser274. Positions 230, 232, and 274 each coordinate isopentenyl diphosphate.

This sequence belongs to the IspH family. [4Fe-4S] cluster is required as a cofactor.

It carries out the reaction isopentenyl diphosphate + 2 oxidized [2Fe-2S]-[ferredoxin] + H2O = (2E)-4-hydroxy-3-methylbut-2-enyl diphosphate + 2 reduced [2Fe-2S]-[ferredoxin] + 2 H(+). The catalysed reaction is dimethylallyl diphosphate + 2 oxidized [2Fe-2S]-[ferredoxin] + H2O = (2E)-4-hydroxy-3-methylbut-2-enyl diphosphate + 2 reduced [2Fe-2S]-[ferredoxin] + 2 H(+). It participates in isoprenoid biosynthesis; dimethylallyl diphosphate biosynthesis; dimethylallyl diphosphate from (2E)-4-hydroxy-3-methylbutenyl diphosphate: step 1/1. Its pathway is isoprenoid biosynthesis; isopentenyl diphosphate biosynthesis via DXP pathway; isopentenyl diphosphate from 1-deoxy-D-xylulose 5-phosphate: step 6/6. Its function is as follows. Catalyzes the conversion of 1-hydroxy-2-methyl-2-(E)-butenyl 4-diphosphate (HMBPP) into a mixture of isopentenyl diphosphate (IPP) and dimethylallyl diphosphate (DMAPP). Acts in the terminal step of the DOXP/MEP pathway for isoprenoid precursor biosynthesis. This is 4-hydroxy-3-methylbut-2-enyl diphosphate reductase from Nitratidesulfovibrio vulgaris (strain DP4) (Desulfovibrio vulgaris).